Reading from the N-terminus, the 137-residue chain is MLQPKRTKYRKMHKGRNDGLAWSGNAVSFGEYGLKATAHGQLTARQIEAARRTISRHVKKGGKMWIRVFPDKPITKKPIEVRMGSGKGNVEYWVAQIQPGRMIYEIEGIPEDIAREAFRLAAAKLSVTTTFVTRTVR.

It belongs to the universal ribosomal protein uL16 family. Part of the 50S ribosomal subunit.

Binds 23S rRNA and is also seen to make contacts with the A and possibly P site tRNAs. The polypeptide is Large ribosomal subunit protein uL16 (Xanthomonas campestris pv. campestris (strain 8004)).